A 112-amino-acid polypeptide reads, in one-letter code: MVRATCLLASCVLFALLLIVPASAYPRYPSNYFREEGQYEPEEIMDMLNRLGNLIQMERKMENYKEDITSEKRALDLGLSRGYSGALQAKHLMGLAAANYAGGPGRRRRDAH.

The signal sequence occupies residues 1–24 (MVRATCLLASCVLFALLLIVPASA). A propeptide spanning residues 25-71 (YPRYPSNYFREEGQYEPEEIMDMLNRLGNLIQMERKMENYKEDITSE) is cleaved from the precursor. Proline amide is present on P104. A propeptide spanning residues 108–112 (RRDAH) is cleaved from the precursor.

Expressed in corpora cardiaca (CC), corpora allata (CA), antennal lobe (AL) and gnathal ganglion (GNG) (at protein level). Expression in CC, CA and AL detected in most animals, expression in GNG in few animals (at protein level).

It localises to the secreted. Functionally, regulation of fluid secretion. Stimulates Malpighian tubule fluid secretion. The chain is Diuretic hormone class 2 from Agrotis ipsilon (Black cutworm moth).